A 374-amino-acid polypeptide reads, in one-letter code: Chaperone protein DnaJ (374 aa).

Residues 5-71 (DLYAILGVCR…QKRASYDRFG (67 aa)) form the J domain. The segment at 132–210 (GVEKQIRIAT…CQGTGRVKDT (79 aa)) adopts a CR-type zinc-finger fold. 8 residues coordinate Zn(2+): Cys145, Cys148, Cys162, Cys165, Cys184, Cys187, Cys198, and Cys201. CXXCXGXG motif repeat units lie at residues 145-152 (CGECHGSG), 162-169 (CPTCNGAG), 184-191 (CPTCHGRG), and 198-205 (CNKCQGTG).

Belongs to the DnaJ family. Homodimer. The cofactor is Zn(2+).

The protein localises to the cytoplasm. Participates actively in the response to hyperosmotic and heat shock by preventing the aggregation of stress-denatured proteins and by disaggregating proteins, also in an autonomous, DnaK-independent fashion. Unfolded proteins bind initially to DnaJ; upon interaction with the DnaJ-bound protein, DnaK hydrolyzes its bound ATP, resulting in the formation of a stable complex. GrpE releases ADP from DnaK; ATP binding to DnaK triggers the release of the substrate protein, thus completing the reaction cycle. Several rounds of ATP-dependent interactions between DnaJ, DnaK and GrpE are required for fully efficient folding. Also involved, together with DnaK and GrpE, in the DNA replication of plasmids through activation of initiation proteins. The polypeptide is Chaperone protein DnaJ (Dichelobacter nodosus (strain VCS1703A)).